Here is a 346-residue protein sequence, read N- to C-terminus: Tetraacyldisaccharide 4'-kinase (346 aa).

Residue 54 to 61 coordinates ATP; the sequence is TVGGAGKT.

It belongs to the LpxK family.

It catalyses the reaction a lipid A disaccharide + ATP = a lipid IVA + ADP + H(+). It participates in glycolipid biosynthesis; lipid IV(A) biosynthesis; lipid IV(A) from (3R)-3-hydroxytetradecanoyl-[acyl-carrier-protein] and UDP-N-acetyl-alpha-D-glucosamine: step 6/6. In terms of biological role, transfers the gamma-phosphate of ATP to the 4'-position of a tetraacyldisaccharide 1-phosphate intermediate (termed DS-1-P) to form tetraacyldisaccharide 1,4'-bis-phosphate (lipid IVA). This chain is Tetraacyldisaccharide 4'-kinase, found in Sinorhizobium fredii (strain NBRC 101917 / NGR234).